A 246-amino-acid polypeptide reads, in one-letter code: DNA repair protein RecO (246 aa).

The protein belongs to the RecO family.

In terms of biological role, involved in DNA repair and RecF pathway recombination. The chain is DNA repair protein RecO from Cutibacterium acnes (strain DSM 16379 / KPA171202) (Propionibacterium acnes).